Reading from the N-terminus, the 206-residue chain is Large ribosomal subunit protein bL25 (206 aa).

The tract at residues 184 to 206 is disordered; it reads AEEAAAEVAEPEVIKKGKEEEEE. The segment covering 195-206 has biased composition (basic and acidic residues); that stretch reads EVIKKGKEEEEE.

It belongs to the bacterial ribosomal protein bL25 family. CTC subfamily. As to quaternary structure, part of the 50S ribosomal subunit; part of the 5S rRNA/L5/L18/L25 subcomplex. Contacts the 5S rRNA. Binds to the 5S rRNA independently of L5 and L18.

In terms of biological role, this is one of the proteins that binds to the 5S RNA in the ribosome where it forms part of the central protuberance. The protein is Large ribosomal subunit protein bL25 of Thermus thermophilus (strain ATCC BAA-163 / DSM 7039 / HB27).